A 129-amino-acid polypeptide reads, in one-letter code: Glycine cleavage system H protein (129 aa).

The 83-residue stretch at 24-106 (IATIGITEFA…YGEGWFLKVR (83 aa)) folds into the Lipoyl-binding domain. An N6-lipoyllysine modification is found at K65.

It belongs to the GcvH family. As to quaternary structure, the glycine cleavage system is composed of four proteins: P, T, L and H. Requires (R)-lipoate as cofactor.

The glycine cleavage system catalyzes the degradation of glycine. The H protein shuttles the methylamine group of glycine from the P protein to the T protein. In Nostoc punctiforme (strain ATCC 29133 / PCC 73102), this protein is Glycine cleavage system H protein.